The primary structure comprises 395 residues: Carbamoyl phosphate synthase small chain (395 aa).

Positions M1–G192 are CPSase. Residues S50, G244, and G246 each contribute to the L-glutamine site. Positions K196–Y383 constitute a Glutamine amidotransferase type-1 domain. Catalysis depends on C273, which acts as the Nucleophile. L-glutamine is bound by residues M274, Q277, N313, G315, and F316. Catalysis depends on residues H356 and E358.

It belongs to the CarA family. Composed of two chains; the small (or glutamine) chain promotes the hydrolysis of glutamine to ammonia, which is used by the large (or ammonia) chain to synthesize carbamoyl phosphate. Tetramer of heterodimers (alpha,beta)4.

The protein resides in the plastid. Its subcellular location is the chloroplast. The enzyme catalyses hydrogencarbonate + L-glutamine + 2 ATP + H2O = carbamoyl phosphate + L-glutamate + 2 ADP + phosphate + 2 H(+). The catalysed reaction is L-glutamine + H2O = L-glutamate + NH4(+). Its pathway is amino-acid biosynthesis; L-arginine biosynthesis; carbamoyl phosphate from bicarbonate: step 1/1. It functions in the pathway pyrimidine metabolism; UMP biosynthesis via de novo pathway; (S)-dihydroorotate from bicarbonate: step 1/3. In terms of biological role, small subunit of the glutamine-dependent carbamoyl phosphate synthetase (CPSase). CPSase catalyzes the formation of carbamoyl phosphate from the ammonia moiety of glutamine, carbonate, and phosphate donated by ATP, constituting the first step of 2 biosynthetic pathways, one leading to arginine and/or urea and the other to pyrimidine nucleotides. The small subunit (glutamine amidotransferase) binds and cleaves glutamine to supply the large subunit with the substrate ammonia. The sequence is that of Carbamoyl phosphate synthase small chain from Gracilaria tenuistipitata var. liui (Red alga).